Here is a 639-residue protein sequence, read N- to C-terminus: Kinesin-like protein KIF22 (639 aa).

Positions 18–345 constitute a Kinesin motor domain; the sequence is RVRVAVRLRP…LNFAAKSKQI (328 aa). 102–109 lines the ATP pocket; that stretch reads GPTGAGKT. Positions 358 to 400 are disordered; that stretch reads IAALPAMKRPREEAETAAGSRQRKKSKTDSTESSPNTSMDAAS. Polar residues predominate over residues 388 to 397; sequence TESSPNTSMD. A coiled-coil region spans residues 439 to 484; it reads KRERMALLKKWEESQMEIERLKEKQKELEQKAIEAEARLEKSTNSD. The short motif at 549 to 552 is the Important for regulated proteolytic degradation element; the sequence is GREN.

It belongs to the TRAFAC class myosin-kinesin ATPase superfamily. Kinesin family. In terms of processing, ubiquitinated, leading to its subsequent proteasomal degradation.

The protein resides in the nucleus. Its subcellular location is the cytoplasm. The protein localises to the cytoskeleton. Its function is as follows. Kinesin family member that is involved in spindle formation and the movements of chromosomes during mitosis and meiosis. Binds to microtubules and to DNA. This is Kinesin-like protein KIF22 (kif22) from Xenopus tropicalis (Western clawed frog).